The primary structure comprises 277 residues: Tryptophan synthase alpha chain (277 aa).

Residues glutamate 50 and aspartate 61 each act as proton acceptor in the active site.

Belongs to the TrpA family. In terms of assembly, tetramer of two alpha and two beta chains.

The catalysed reaction is (1S,2R)-1-C-(indol-3-yl)glycerol 3-phosphate + L-serine = D-glyceraldehyde 3-phosphate + L-tryptophan + H2O. Its pathway is amino-acid biosynthesis; L-tryptophan biosynthesis; L-tryptophan from chorismate: step 5/5. The alpha subunit is responsible for the aldol cleavage of indoleglycerol phosphate to indole and glyceraldehyde 3-phosphate. This chain is Tryptophan synthase alpha chain, found in Beijerinckia indica subsp. indica (strain ATCC 9039 / DSM 1715 / NCIMB 8712).